The primary structure comprises 202 residues: Recombination protein RecR (202 aa).

The C4-type zinc-finger motif lies at 61 to 76 (CARCNSFTEDDICATC). The region spanning 84–179 (SVLCVVETPA…KVTRLARGVP (96 aa)) is the Toprim domain.

This sequence belongs to the RecR family.

Its function is as follows. May play a role in DNA repair. It seems to be involved in an RecBC-independent recombinational process of DNA repair. It may act with RecF and RecO. The protein is Recombination protein RecR of Bordetella petrii (strain ATCC BAA-461 / DSM 12804 / CCUG 43448).